Here is a 367-residue protein sequence, read N- to C-terminus: Heparan sulfate glucosamine 3-O-sulfotransferase 2 (367 aa).

Residues 1–19 (MAYRVLGRAGPPQPRRARR) lie on the Cytoplasmic side of the membrane. Residues 20 to 39 (LLFAFTLSLSCTYLCYSFLC) form a helical; Signal-anchor for type II membrane protein membrane-spanning segment. Residues 40–367 (CCDGLGQSRL…ETVGQDFRWE (328 aa)) lie on the Lumenal side of the membrane. The segment at 66 to 115 (LLAKSRPCDPPGPTPSEPSAPSAPAAAAPAPRLSGSNHSGSPKPGTKRLP) is disordered. Residues 73–83 (CDPPGPTPSEP) show a composition bias toward pro residues. Over residues 84 to 96 (SAPSAPAAAAPAP) the composition is skewed to low complexity. The N-linked (GlcNAc...) asparagine glycan is linked to N102. A 3'-phosphoadenylyl sulfate-binding site is contributed by 124–128 (KGGTR). Substrate-binding positions include 146–152 (EPHFFDR) and 177–180 (KTPS). N193 carries N-linked (GlcNAc...) asparagine glycosylation. Positions 205 and 213 each coordinate 3'-phosphoadenylyl sulfate. N235 is a glycosylation site (N-linked (GlcNAc...) asparagine). Position 245–246 (245–246 (WN)) interacts with substrate. N-linked (GlcNAc...) asparagine glycosylation is present at N306. A disulfide bridge connects residues C313 and C325. A 3'-phosphoadenylyl sulfate-binding site is contributed by 330-334 (KGRTH).

It belongs to the sulfotransferase 1 family.

It is found in the golgi apparatus membrane. It catalyses the reaction alpha-D-glucosaminyl-[heparan sulfate](n) + 3'-phosphoadenylyl sulfate = 3-sulfo-alpha-D-glucosaminyl-[heparan sulfate](n) + adenosine 3',5'-bisphosphate + H(+). Sulfotransferase that utilizes 3'-phospho-5'-adenylyl sulfate (PAPS) to catalyze the transfer of a sulfo group to an N-unsubstituted glucosamine linked to a 2-O-sulfo iduronic acid unit on heparan sulfate. Catalyzes the O-sulfation of glucosamine in GlcA2S-GlcNS. Unlike HS3ST1/3-OST-1, does not convert non-anticoagulant heparan sulfate to anticoagulant heparan sulfate. This is Heparan sulfate glucosamine 3-O-sulfotransferase 2 (Hs3st2) from Mus musculus (Mouse).